A 949-amino-acid chain; its full sequence is RNA polymerase-associated protein RapA (949 aa).

Positions 164–332 constitute a Helicase ATP-binding domain; the sequence is EVADRIAPRV…FARLRLLDPN (169 aa). 177 to 184 contacts ATP; the sequence is DEVGLGKT. The short motif at 278–281 is the DEAH box element; sequence DEAH. The Helicase C-terminal domain maps to 474–628; sequence RVEWLIDQLK…TCPTGNALQH (155 aa).

This sequence belongs to the SNF2/RAD54 helicase family. RapA subfamily. As to quaternary structure, interacts with the RNAP. Has a higher affinity for the core RNAP than for the holoenzyme. Its ATPase activity is stimulated by binding to RNAP.

Transcription regulator that activates transcription by stimulating RNA polymerase (RNAP) recycling in case of stress conditions such as supercoiled DNA or high salt concentrations. Probably acts by releasing the RNAP, when it is trapped or immobilized on tightly supercoiled DNA. Does not activate transcription on linear DNA. Probably not involved in DNA repair. This chain is RNA polymerase-associated protein RapA, found in Pseudomonas fluorescens (strain ATCC BAA-477 / NRRL B-23932 / Pf-5).